Consider the following 130-residue polypeptide: Small ribosomal subunit protein uS9 (130 aa).

The protein belongs to the universal ribosomal protein uS9 family.

The polypeptide is Small ribosomal subunit protein uS9 (Magnetococcus marinus (strain ATCC BAA-1437 / JCM 17883 / MC-1)).